A 270-amino-acid chain; its full sequence is Putative pyruvate, phosphate dikinase regulatory protein (270 aa).

149–156 is a binding site for ADP; it reads GVSRTSKT.

This sequence belongs to the pyruvate, phosphate/water dikinase regulatory protein family. PDRP subfamily.

The enzyme catalyses N(tele)-phospho-L-histidyl/L-threonyl-[pyruvate, phosphate dikinase] + ADP = N(tele)-phospho-L-histidyl/O-phospho-L-threonyl-[pyruvate, phosphate dikinase] + AMP + H(+). It catalyses the reaction N(tele)-phospho-L-histidyl/O-phospho-L-threonyl-[pyruvate, phosphate dikinase] + phosphate + H(+) = N(tele)-phospho-L-histidyl/L-threonyl-[pyruvate, phosphate dikinase] + diphosphate. Functionally, bifunctional serine/threonine kinase and phosphorylase involved in the regulation of the pyruvate, phosphate dikinase (PPDK) by catalyzing its phosphorylation/dephosphorylation. In Sphingopyxis alaskensis (strain DSM 13593 / LMG 18877 / RB2256) (Sphingomonas alaskensis), this protein is Putative pyruvate, phosphate dikinase regulatory protein.